The following is a 43-amino-acid chain: Large ribosomal subunit protein uL11 (43 aa).

It belongs to the universal ribosomal protein uL11 family. In terms of assembly, part of the ribosomal stalk of the 50S ribosomal subunit. Interacts with L10 and the large rRNA to form the base of the stalk. L10 forms an elongated spine to which L12 dimers bind in a sequential fashion forming a multimeric L10(L12)X complex. In terms of processing, one or more lysine residues are methylated.

In terms of biological role, forms part of the ribosomal stalk which helps the ribosome interact with GTP-bound translation factors. The sequence is that of Large ribosomal subunit protein uL11 (rplK) from Streptomyces galbus.